Reading from the N-terminus, the 434-residue chain is Putative neutral sphingomyelinase (434 aa).

Residue Glu83 coordinates Mg(2+). His318 functions as the Proton acceptor in the catalytic mechanism. 2 helical membrane-spanning segments follow: residues 366-388 (IFFF…FEVF) and 392-414 (FAVL…LIGL).

Belongs to the neutral sphingomyelinase family.

It localises to the membrane. The enzyme catalyses an N-(acyl)-sphingosylphosphocholine + H2O = an N-acyl-sphingoid base + phosphocholine + H(+). It carries out the reaction a sphingomyelin + H2O = phosphocholine + an N-acylsphing-4-enine + H(+). It catalyses the reaction an N-acyl-15-methylhexadecasphing-4-enine-1-phosphocholine + H2O = an N-acyl-15-methylhexadecasphing-4-enine + phosphocholine + H(+). It participates in lipid metabolism; sphingolipid metabolism. Functionally, catalyzes the hydrolysis of sphingomyelin producing a ceramide (N-acyl-sphingoid base) and a phosphocholine. C.elegans contain specific sphingoid bases, which are unique or different in structure compared to the sphingoid bases found in other animals. Two examples of these distinctive compounds are: 15-methylhexadecasphinganine and 15-methylhexadecasphing-4-enine. This chain is Putative neutral sphingomyelinase, found in Caenorhabditis elegans.